A 564-amino-acid chain; its full sequence is Dihydroxy-acid dehydratase (564 aa).

C55 serves as a coordination point for [2Fe-2S] cluster. D87 is a Mg(2+) binding site. C128 is a binding site for [2Fe-2S] cluster. Positions 129 and 130 each coordinate Mg(2+). Residue K130 is modified to N6-carboxylysine. A [2Fe-2S] cluster-binding site is contributed by C200. E452 lines the Mg(2+) pocket. The active-site Proton acceptor is S478.

It belongs to the IlvD/Edd family. As to quaternary structure, homodimer. It depends on [2Fe-2S] cluster as a cofactor. The cofactor is Mg(2+).

It catalyses the reaction (2R)-2,3-dihydroxy-3-methylbutanoate = 3-methyl-2-oxobutanoate + H2O. The catalysed reaction is (2R,3R)-2,3-dihydroxy-3-methylpentanoate = (S)-3-methyl-2-oxopentanoate + H2O. It participates in amino-acid biosynthesis; L-isoleucine biosynthesis; L-isoleucine from 2-oxobutanoate: step 3/4. Its pathway is amino-acid biosynthesis; L-valine biosynthesis; L-valine from pyruvate: step 3/4. In terms of biological role, functions in the biosynthesis of branched-chain amino acids. Catalyzes the dehydration of (2R,3R)-2,3-dihydroxy-3-methylpentanoate (2,3-dihydroxy-3-methylvalerate) into 2-oxo-3-methylpentanoate (2-oxo-3-methylvalerate) and of (2R)-2,3-dihydroxy-3-methylbutanoate (2,3-dihydroxyisovalerate) into 2-oxo-3-methylbutanoate (2-oxoisovalerate), the penultimate precursor to L-isoleucine and L-valine, respectively. The polypeptide is Dihydroxy-acid dehydratase (Polaromonas sp. (strain JS666 / ATCC BAA-500)).